Here is a 450-residue protein sequence, read N- to C-terminus: MKATKTTYKKDPMGLTPSQIVNELNRFIVGQEKAKKAVAIALRNRCRRKRVEGNLRNEIVPKNILMIGSTGVGKTEIARRLAKLTNSPFYKIEATKFTEVGYVGRDVESIIRDLVEIAVNTEKTLAKTKVDIHAREKAIERILDSLVGKTSSSETREKFKEKILNGELDDTEIEISVADTTPVGGGSFEIPGMPGASMGVLNLGDMIGRALGSSKTKTKKMLVKDAMAIIIPEESEKLIDQEKIIQQAINLAENDGIVFIDEIDKIASTGSSGAKNAEISREGVQRDLLPLIEGTTVNTKYGPVKTDHILFIASGAFHIAKPSDLLPELQGRLPIRVELNSLTKDDMIKILLEPETSLIKQYSALIGTEDVRLEFAASAIEKIADYAITVNLEVEDIGARRLHTILENLLEDISFEASEMKGKKITIDDKFVENQLSKIITNLDLAKFVL.

ATP contacts are provided by residues Val29, 71–76 (GVGKTE), Asp261, Glu328, and Arg400.

Belongs to the ClpX chaperone family. HslU subfamily. A double ring-shaped homohexamer of HslV is capped on each side by a ring-shaped HslU homohexamer. The assembly of the HslU/HslV complex is dependent on binding of ATP.

It is found in the cytoplasm. ATPase subunit of a proteasome-like degradation complex; this subunit has chaperone activity. The binding of ATP and its subsequent hydrolysis by HslU are essential for unfolding of protein substrates subsequently hydrolyzed by HslV. HslU recognizes the N-terminal part of its protein substrates and unfolds these before they are guided to HslV for hydrolysis. The polypeptide is ATP-dependent protease ATPase subunit HslU (Rickettsia peacockii (strain Rustic)).